We begin with the raw amino-acid sequence, 183 residues long: MSQPAKVLLLYAHPESQDSVANRVLLKPAIQHNNVTVHDLYARYPDFFIDTPYEQALLREHDVIVFQHPLYTYSCPALLKEWLDRVLSRGFASGPGGNQLVGKYWRSVITTGEPESAYRYDALNRYPMSDVLRPFELTAAMCRMHWMPPIIVYWARRHSPQTLASHAKAYGEWLANPVSAGGY.

This sequence belongs to the NAD(P)H dehydrogenase (quinone) family. KefG subfamily. In terms of assembly, interacts with KefB.

It is found in the cell inner membrane. It catalyses the reaction a quinone + NADH + H(+) = a quinol + NAD(+). It carries out the reaction a quinone + NADPH + H(+) = a quinol + NADP(+). Functionally, regulatory subunit of a potassium efflux system that confers protection against electrophiles. Required for full activity of KefB. The polypeptide is Glutathione-regulated potassium-efflux system ancillary protein KefG (Salmonella paratyphi C (strain RKS4594)).